Here is a 515-residue protein sequence, read N- to C-terminus: MEFRLLILALFSVLMSTSNGAEILALFPIHGISNYNVAEALLKTLANRGHNVTVVTSFPQKKPVPNLYEIDVSGAKGLATNSIHFERLQTIIQDVKSNFKNMVRLSRTYCEIMFSDPRVLNIRDKKFDLVINAVFGSDCDAGFAWKSQAPLISILNARHTPWALHRMGNPSNPAYMPVIHSRFPVKMNFFQRMINTGWHLYFLYMYFYYGNGEDANKMARKFFGNDMPDINEMVFNTSLLFVNTHFSVDMPYPLVPNCIEIGGIHVKEPQPLPLEIQKFMDEAEHGVIFFTLGSMVRTSTFPNQTIQAFKEAFAELPQRVLWKFENENEDMPSNVLIRKWFPQNDIFGHKNIKAFISHGGNSGALEAVHFGVPIIGIPLFYDQYRNILSFVKEGVAVLLDVNDLTKDNILSSVRTVVNDKSYSERMKALSQLFRDRPMSPLDTAVYWTEYVIRHRGAHHLKTAGAFLHWYQYLLLDVITFLLVTFCAFCFIVKYICKALIHHYWSSSKSEKLKKN.

The signal sequence occupies residues M1–G20. At A21 to Q471 the chain is on the lumenal side. Residues N51, N236, and N303 are each glycosylated (N-linked (GlcNAc...) asparagine). Residues Y472–V492 traverse the membrane as a helical segment. The Cytoplasmic portion of the chain corresponds to K493–N515.

It belongs to the UDP-glycosyltransferase family. In terms of processing, glycosylated.

The protein localises to the endoplasmic reticulum membrane. The catalysed reaction is kermesate + UDP-alpha-D-glucose = carminate + UDP + 2 H(+). It catalyses the reaction flavokermesate + UDP-alpha-D-glucose = flavokermesate 7-C-beta-D-glucoside + UDP + 2 H(+). Membrane-bound UDP-glucosyltransferase (UGT) which catalyzes the C-glucosylation of kermesate and flavokermesate to produce carminate and flavokermesate 7-C-beta-D-glucoside (dcll) respectively. Carminate is used as a deterrent against insect predators. This chain is UDP-glucosyltransferase 2, found in Dactylopius coccus (Cochineal).